A 102-amino-acid chain; its full sequence is Small ribosomal subunit protein uS10 (102 aa).

Belongs to the universal ribosomal protein uS10 family. Part of the 30S ribosomal subunit.

In terms of biological role, involved in the binding of tRNA to the ribosomes. This is Small ribosomal subunit protein uS10 from Rhodopseudomonas palustris (strain BisB18).